A 1208-amino-acid chain; its full sequence is DNA-directed RNA polymerase subunit beta (1208 aa).

Belongs to the RNA polymerase beta chain family. The RNAP catalytic core consists of 2 alpha, 1 beta, 1 beta' and 1 omega subunit. When a sigma factor is associated with the core the holoenzyme is formed, which can initiate transcription.

It catalyses the reaction RNA(n) + a ribonucleoside 5'-triphosphate = RNA(n+1) + diphosphate. In terms of biological role, DNA-dependent RNA polymerase catalyzes the transcription of DNA into RNA using the four ribonucleoside triphosphates as substrates. The protein is DNA-directed RNA polymerase subunit beta of Enterococcus faecium (Streptococcus faecium).